A 92-amino-acid polypeptide reads, in one-letter code: PqqA binding protein (92 aa).

Belongs to the PqqD family. As to quaternary structure, monomer. Interacts with PqqE.

It participates in cofactor biosynthesis; pyrroloquinoline quinone biosynthesis. Functionally, functions as a PqqA binding protein and presents PqqA to PqqE, in the pyrroloquinoline quinone (PQQ) biosynthetic pathway. The chain is PqqA binding protein from Xanthomonas axonopodis pv. citri (strain 306).